A 138-amino-acid chain; its full sequence is Large ribosomal subunit protein uL16 (138 aa).

The protein belongs to the universal ribosomal protein uL16 family. As to quaternary structure, part of the 50S ribosomal subunit.

Functionally, binds 23S rRNA and is also seen to make contacts with the A and possibly P site tRNAs. This Ureaplasma urealyticum serovar 10 (strain ATCC 33699 / Western) protein is Large ribosomal subunit protein uL16.